Consider the following 130-residue polypeptide: Small ribosomal subunit protein uS9 (130 aa).

The segment at 104 to 130 is disordered; sequence LTRDPRMKERRKYGLKKARKAPQFSKR. The segment covering 111–130 has biased composition (basic residues); it reads KERRKYGLKKARKAPQFSKR.

This sequence belongs to the universal ribosomal protein uS9 family.

This chain is Small ribosomal subunit protein uS9, found in Moorella thermoacetica (strain ATCC 39073 / JCM 9320).